A 354-amino-acid chain; its full sequence is Peptide chain release factor 1 (354 aa).

Glutamine 230 bears the N5-methylglutamine mark.

This sequence belongs to the prokaryotic/mitochondrial release factor family. Methylated by PrmC. Methylation increases the termination efficiency of RF1.

It localises to the cytoplasm. Functionally, peptide chain release factor 1 directs the termination of translation in response to the peptide chain termination codons UAG and UAA. In Pelobacter propionicus (strain DSM 2379 / NBRC 103807 / OttBd1), this protein is Peptide chain release factor 1.